A 120-amino-acid polypeptide reads, in one-letter code: Non-specific lipid-transfer protein (120 aa).

A signal peptide spans 1-26; sequence MASSMSLKLACVVVLCMVVGAPLAQG. 3 cysteine pairs are disulfide-bonded: Cys-40/Cys-56, Cys-57/Cys-102, and Cys-77/Cys-116.

Belongs to the plant LTP family.

Functionally, plant non-specific lipid-transfer proteins transfer phospholipids as well as galactolipids across membranes. May play a role in wax or cutin deposition in the cell walls of expanding epidermal cells and certain secretory tissues. This chain is Non-specific lipid-transfer protein, found in Gossypium hirsutum (Upland cotton).